We begin with the raw amino-acid sequence, 103 residues long: Small ribosomal subunit protein uS10 (103 aa).

This sequence belongs to the universal ribosomal protein uS10 family. Part of the 30S ribosomal subunit.

Involved in the binding of tRNA to the ribosomes. This chain is Small ribosomal subunit protein uS10, found in Pseudoalteromonas atlantica (strain T6c / ATCC BAA-1087).